Here is a 247-residue protein sequence, read N- to C-terminus: ATP synthase delta chain, chloroplastic (247 aa).

The N-terminal 60 residues, Met1 to Arg60, are a transit peptide targeting the chloroplast.

It belongs to the ATPase delta chain family. F-type ATPases have 2 components, CF(1) - the catalytic core - and CF(0) - the membrane proton channel. CF(1) has five subunits: alpha(3), beta(3), gamma(1), delta(1), epsilon(1). CF(0) has three main subunits: a, b and c.

The protein localises to the plastid. The protein resides in the chloroplast thylakoid membrane. Functionally, this protein seems to be part of the stalk that links CF(0) to CF(1). It either transmits conformational changes from CF(0) into CF(1) or is implicated in proton conduction. This Sorghum bicolor (Sorghum) protein is ATP synthase delta chain, chloroplastic (ATPD).